Reading from the N-terminus, the 144-residue chain is 3-hydroxyacyl-[acyl-carrier-protein] dehydratase FabZ (144 aa).

His-48 is an active-site residue.

This sequence belongs to the thioester dehydratase family. FabZ subfamily.

It localises to the cytoplasm. The enzyme catalyses a (3R)-hydroxyacyl-[ACP] = a (2E)-enoyl-[ACP] + H2O. Its function is as follows. Involved in unsaturated fatty acids biosynthesis. Catalyzes the dehydration of short chain beta-hydroxyacyl-ACPs and long chain saturated and unsaturated beta-hydroxyacyl-ACPs. The chain is 3-hydroxyacyl-[acyl-carrier-protein] dehydratase FabZ from Bacillus licheniformis (strain ATCC 14580 / DSM 13 / JCM 2505 / CCUG 7422 / NBRC 12200 / NCIMB 9375 / NCTC 10341 / NRRL NRS-1264 / Gibson 46).